A 40-amino-acid polypeptide reads, in one-letter code: Photosystem II reaction center protein J (40 aa).

A helical membrane pass occupies residues 8-28 (IPLWLIGTVAGIAVIGLVGVF).

Belongs to the PsbJ family. As to quaternary structure, PSII is composed of 1 copy each of membrane proteins PsbA, PsbB, PsbC, PsbD, PsbE, PsbF, PsbH, PsbI, PsbJ, PsbK, PsbL, PsbM, PsbT, PsbX, PsbY, PsbZ, Psb30/Ycf12, at least 3 peripheral proteins of the oxygen-evolving complex and a large number of cofactors. It forms dimeric complexes.

It localises to the plastid. The protein localises to the chloroplast thylakoid membrane. Its function is as follows. One of the components of the core complex of photosystem II (PSII). PSII is a light-driven water:plastoquinone oxidoreductase that uses light energy to abstract electrons from H(2)O, generating O(2) and a proton gradient subsequently used for ATP formation. It consists of a core antenna complex that captures photons, and an electron transfer chain that converts photonic excitation into a charge separation. This Secale cereale (Rye) protein is Photosystem II reaction center protein J.